The sequence spans 605 residues: Tungsten-containing aldehyde ferredoxin oxidoreductase (605 aa).

Tungstopterin contacts are provided by arginine 76, asparagine 93, glycine 95, arginine 182, alanine 183, glycine 185, and arginine 186. Residues cysteine 288, cysteine 291, and cysteine 295 each contribute to the [4Fe-4S] cluster site. Tungstopterin-binding residues include aspartate 338, leucine 342, aspartate 343, arginine 444, lysine 450, aspartate 489, and leucine 493. Cysteine 494 is a [4Fe-4S] cluster binding site. A tungstopterin-binding site is contributed by leucine 495.

It belongs to the AOR/FOR family. As to quaternary structure, monomer. Homodimer. It depends on [4Fe-4S] cluster as a cofactor. Tungstopterin serves as cofactor.

The enzyme catalyses an aldehyde + 2 oxidized [2Fe-2S]-[ferredoxin] + H2O = a carboxylate + 2 reduced [2Fe-2S]-[ferredoxin] + 3 H(+). Inhibited by arsenite, iodoacetate and cyanide. Aldehyde ferredoxin oxidoreductase with a broad substrate specificity. Catalyzes the oxidation of a range of aliphatic aldehydes to their corresponding carboxylic acids. In vitro can use crotonaldehyde, acetaldehyde, formaldehyde, butyraldehyde or glyceraldehyde as substrate, using methyl viologen or ferredoxin, but not NAD(P), as the electron acceptor. Does not oxidize glucose or glyceraldehyde 3-phosphate. May be involved in a pyroglycolytic pathway. The sequence is that of Tungsten-containing aldehyde ferredoxin oxidoreductase from Pyrococcus furiosus (strain ATCC 43587 / DSM 3638 / JCM 8422 / Vc1).